We begin with the raw amino-acid sequence, 357 residues long: Histidinol-phosphate aminotransferase (357 aa).

Lysine 218 carries the post-translational modification N6-(pyridoxal phosphate)lysine.

Belongs to the class-II pyridoxal-phosphate-dependent aminotransferase family. Histidinol-phosphate aminotransferase subfamily. Homodimer. Requires pyridoxal 5'-phosphate as cofactor.

It carries out the reaction L-histidinol phosphate + 2-oxoglutarate = 3-(imidazol-4-yl)-2-oxopropyl phosphate + L-glutamate. It participates in amino-acid biosynthesis; L-histidine biosynthesis; L-histidine from 5-phospho-alpha-D-ribose 1-diphosphate: step 7/9. This is Histidinol-phosphate aminotransferase from Chlorobium luteolum (strain DSM 273 / BCRC 81028 / 2530) (Pelodictyon luteolum).